The chain runs to 234 residues: Phycobilisome rod-core linker polypeptide cpcG (234 aa).

A PBS-linker domain is found at 11–191; it reads SSQNHRVNSF…PRYGSDFKER (181 aa).

It belongs to the phycobilisome linker protein family. The phycobilisome is a hemidiscoidal structure that is composed of two distinct substructures: a core complex and a number of rods radiating from the core.

The protein localises to the plastid. The protein resides in the chloroplast thylakoid membrane. Functionally, rod-core linker protein required for attachment of phycocyanin to allophycocyanin in cores of phycobilisomes. In terms of biological role, linker polypeptides determine the state of aggregation and the location of the disk-shaped phycobiliprotein units within the phycobilisome and modulate their spectroscopic properties in order to mediate a directed and optimal energy transfer. This is Phycobilisome rod-core linker polypeptide cpcG (cpcG) from Cyanidium caldarium (Red alga).